A 437-amino-acid polypeptide reads, in one-letter code: GTPase Obg (437 aa).

The Obg domain occupies 2–160 (SMFLDTAKIS…RQLELELKIL (159 aa)). Residues 161 to 338 (ADVGLVGFPS…LLEATAELLA (178 aa)) form the OBG-type G domain. Residues 167-174 (GFPSVGKS), 192-196 (FTTIV), 214-217 (DLPG), 284-287 (NKMD), and 319-321 (SSL) contribute to the GTP site. The Mg(2+) site is built by S174 and T194. In terms of domain architecture, OCT spans 359–437 (GFAETEKDFE…IGKFEFEFVD (79 aa)).

It belongs to the TRAFAC class OBG-HflX-like GTPase superfamily. OBG GTPase family. Monomer. Mg(2+) serves as cofactor.

Its subcellular location is the cytoplasm. Its function is as follows. An essential GTPase which binds GTP, GDP and possibly (p)ppGpp with moderate affinity, with high nucleotide exchange rates and a fairly low GTP hydrolysis rate. Plays a role in control of the cell cycle, stress response, ribosome biogenesis and in those bacteria that undergo differentiation, in morphogenesis control. This is GTPase Obg from Streptococcus pyogenes serotype M4 (strain MGAS10750).